A 163-amino-acid polypeptide reads, in one-letter code: Protein VASCULATURE COMPLEXITY AND CONNECTIVITY (163 aa).

The signal sequence occupies residues 1–27 (MTKIGGILVCLVIVGLDVAAAILGIQA). Helical transmembrane passes span 54–74 (LGLG…LVGG), 95–115 (MACL…IVIG), and 133–153 (FLSI…AYYV).

This sequence belongs to the DESIGUAL family. Interacts with OPS. As to expression, expressed in vascular cells, mostly in hypocotyls, and, to a lower extent, in seedlings, roots, flowers, siliques, developing leaves and inflorescences, but barely in mature leaves and seeds. High levels in leaf primordia.

Its subcellular location is the endoplasmic reticulum membrane. Its function is as follows. Required, together with OPS, for embryo provasculature development and cotyledon vascular complexity and connectivity. Necessary, partially redundantly with DEAL2 and DEAL3, to ensure bilateral symmetry development and early leaf margin patterning, probably via the regulation of auxin and CUC2 distribution. Regulates cell proliferation but not cell expansion. This is Protein VASCULATURE COMPLEXITY AND CONNECTIVITY from Arabidopsis thaliana (Mouse-ear cress).